A 267-amino-acid polypeptide reads, in one-letter code: MKDFITEAWLRANHTLSEGAEIHLPADSRLTPSARELLESRHLRIKFIDEQGRLFVDDEQQQPQPVHGLTSSDEHPQACCELCRQPVAKKPDTLTHLSAEKMVAKSDPRLGFRAVLDSTIALAVWLQIELAEPWQPWLADIRSRLGNIMRADALGEPLGCQAIVGLSDEDLHRLSHQPLRYLDHDHLVPEASHGRDAALLNLLRTKVRETETVAAQVFITRSFEVLRPDILQALNRLSSTVYVMMILSVTKQPLTVKQIQQRLGETQ.

Positions 80 and 83 each coordinate a divalent metal cation.

The protein belongs to the Cob(I)alamin adenosyltransferase family. EutT subfamily. Homodimer. It depends on a divalent metal cation as a cofactor.

The protein localises to the bacterial microcompartment. The enzyme catalyses 2 cob(II)alamin + reduced [electron-transfer flavoprotein] + 2 ATP + 2 H2O = 2 adenosylcob(III)alamin + oxidized [electron-transfer flavoprotein] + 2 phosphate + 2 diphosphate + 3 H(+). It carries out the reaction 2 cob(II)inamide + reduced [electron-transfer flavoprotein] + 2 ATP + 2 H2O = 2 adenosylcob(III)inamide + oxidized [electron-transfer flavoprotein] + 2 phosphate + 2 diphosphate + 3 H(+). The protein operates within amine and polyamine degradation; ethanolamine degradation. Converts cyanocobalamin (CN-B12) to adenosylcobalamin (AdoCbl), the inducer of the eut operon. Is not active on cobinamide nor other intermediates in the adenosylcobalamin synthetic pathway. Allows full induction of the eut operon. In Escherichia coli O6:H1 (strain CFT073 / ATCC 700928 / UPEC), this protein is Corrinoid adenosyltransferase EutT (eutT).